The primary structure comprises 404 residues: Zinc transporter 10 (404 aa).

The first 22 residues, 1–22 (MESSSSSSYIPFIRQIAASVSA), serve as a signal peptide directing secretion. Topologically, residues 23–49 (ASCDAVVGGGGDKDEECRDEAAALRLK) are extracellular. Residues 50–70 (MVAVAAILIAGAAGVAIPLVG) traverse the membrane as a helical segment. Over 71-86 (RRRRGGGGGGGGGASS) the chain is Cytoplasmic. The helical transmembrane segment at 87 to 107 (GGLFVLAKAFAAGVILATGFV) threads the bilayer. Topologically, residues 108 to 129 (HMLHDAEHALSNPCLPHSPWRR) are extracellular. The helical transmembrane segment at 130–150 (FPFPGFVAMLAALATLVVDFV) threads the bilayer. Residues 151–248 (GTHFYERKHR…GHEEGPSARH (98 aa)) lie on the Cytoplasmic side of the membrane. A helical membrane pass occupies residues 249-269 (VVVSQILELGIVSHSVIIGLS). Residues 270 to 280 (LGVSQSPCTIK) are Extracellular-facing. A helical transmembrane segment spans residues 281-301 (PLVAALSFHQFFEGFALGGCI). Residues 302 to 311 (SEAQLKNFSA) lie on the Cytoplasmic side of the membrane. Residues 312–332 (FLMAFFFAITTPAGITVGAAV) form a helical membrane-spanning segment. Over 333–343 (ASFYNPNSPRA) the chain is Extracellular. Residues 344–364 (LVVEGILDSMSAGILIYMALV) traverse the membrane as a helical segment. Residues 365–383 (DLIAADFLSRKMSCNPRLQ) are Cytoplasmic-facing. The chain crosses the membrane as a helical span at residues 384–404 (VGSYIALFLGAMAMAALALWA).

The protein belongs to the ZIP transporter (TC 2.A.5) family.

The protein resides in the cell membrane. Its function is as follows. Zinc transporter that may be involved in zinc uptake from the rhizosphere. The chain is Zinc transporter 10 (ZIP10) from Oryza sativa subsp. japonica (Rice).